The primary structure comprises 20 residues: VVGGDECNINEHRFLVALYY.

The Peptidase S1 domain maps to V1–Y20.

It belongs to the peptidase S1 family. Snake venom subfamily. As to quaternary structure, monomer. In terms of processing, glycosylated. In terms of tissue distribution, expressed by the venom gland.

The protein localises to the secreted. With respect to regulation, strongly inactivated by diisopropylfluorophosphate (DFP) and to a lesser extent by tosyl-L-lysine chloromethyl ketone (TLCK). Functionally, thrombin-like snake venom serine protease. Releases both fibrinopeptides A and B from fibrinogen (FGA and FGB) to form fibrin clots. The protein is Thrombin-like enzyme okinaxobin-2 of Ovophis okinavensis (Ryukyu Island pit viper).